A 348-amino-acid polypeptide reads, in one-letter code: Anthranilate phosphoribosyltransferase (348 aa).

Residues Gly87, 90–91 (GD), Thr95, 97–100 (NIST), 115–123 (KHGNRSASG), and Ser127 each bind 5-phospho-alpha-D-ribose 1-diphosphate. Gly87 contributes to the anthranilate binding site. Ser99 is a Mg(2+) binding site. Asn118 contributes to the anthranilate binding site. Arg173 contributes to the anthranilate binding site. Positions 232 and 233 each coordinate Mg(2+).

This sequence belongs to the anthranilate phosphoribosyltransferase family. As to quaternary structure, homodimer. It depends on Mg(2+) as a cofactor.

It catalyses the reaction N-(5-phospho-beta-D-ribosyl)anthranilate + diphosphate = 5-phospho-alpha-D-ribose 1-diphosphate + anthranilate. Its pathway is amino-acid biosynthesis; L-tryptophan biosynthesis; L-tryptophan from chorismate: step 2/5. Its function is as follows. Catalyzes the transfer of the phosphoribosyl group of 5-phosphorylribose-1-pyrophosphate (PRPP) to anthranilate to yield N-(5'-phosphoribosyl)-anthranilate (PRA). The protein is Anthranilate phosphoribosyltransferase of Synechococcus sp. (strain WH7803).